We begin with the raw amino-acid sequence, 638 residues long: Chaperone protein HtpG (638 aa).

An a; substrate-binding region spans residues 1-328; it reads MGDVEELKFS…SSDLPLNISR (328 aa). Positions 329 to 558 are b; that stretch reads ETLQNNMVIE…EHALDIRMER (230 aa). The segment at 484-508 is disordered; that stretch reads LEKFTEGDDQQSTKKKKEKKDTDDA. Positions 559 to 638 are c; the sequence is FLREQKQLSY…NQVLARLFKK (80 aa).

It belongs to the heat shock protein 90 family. Homodimer.

Its subcellular location is the cytoplasm. Functionally, molecular chaperone. Has ATPase activity. This Anaplasma marginale (strain St. Maries) protein is Chaperone protein HtpG.